The chain runs to 55 residues: Small integral membrane protein 27 (55 aa).

A helical transmembrane segment spans residues 11 to 31 (WIYSVLLLAIVLISWGCIIYA).

Its subcellular location is the membrane. The sequence is that of Small integral membrane protein 27 from Homo sapiens (Human).